Here is a 141-residue protein sequence, read N- to C-terminus: Protein MGF 100-2L (141 aa).

Belongs to the asfivirus MGF 100 family.

Functionally, plays a role in virus cell tropism, and may be required for efficient virus replication in macrophages. In African swine fever virus (strain Badajoz 1971 Vero-adapted) (Ba71V), this protein is Protein MGF 100-2L.